A 139-amino-acid chain; its full sequence is Large ribosomal subunit protein bL17 (139 aa).

Belongs to the bacterial ribosomal protein bL17 family. In terms of assembly, part of the 50S ribosomal subunit. Contacts protein L32.

This is Large ribosomal subunit protein bL17 from Afipia carboxidovorans (strain ATCC 49405 / DSM 1227 / KCTC 32145 / OM5) (Oligotropha carboxidovorans).